The chain runs to 915 residues: Hexokinase HKDC1 (915 aa).

A mitochondrial-binding peptide (MBP) region spans residues 1 to 20 (MFAVHLVAFYFTKLKEDQIK). Hexokinase domains lie at 16 to 458 (EDQI…MVTA) and 464 to 903 (QAQR…LITA). Residues arginine 30 and 84 to 89 (DLGGSK) each bind ATP. Residues 73–207 (DGSENGEFLS…DLDVDILALV (135 aa)) are hexokinase small subdomain 1. 84 to 91 (DLGGSKFR) contributes to the D-glucose 6-phosphate binding site. D-glucose is bound by residues serine 155, 172-173 (TK), and 208-209 (ND). The tract at residues 208–447 (NDTVGTMMTC…CDVRFLLSES (240 aa)) is hexokinase large subdomain 1. Residues aspartate 209 and threonine 232 each coordinate D-glucose 6-phosphate. Residues asparagine 235, glutamate 260, and 291–294 (QLFE) each bind D-glucose. 413–415 (DGT) serves as a coordination point for D-glucose 6-phosphate. 425 to 426 (KR) serves as a coordination point for ATP. D-glucose 6-phosphate is bound by residues serine 449 and 532 to 536 (DLGGT). The tract at residues 521 to 652 (DGTEKGKFLA…EFDLDIVAIV (132 aa)) is hexokinase small subdomain 2. Residue 532-537 (DLGGTN) coordinates ATP. D-glucose-binding positions include 600–601 (SF), 617–618 (TK), and 653–654 (ND). Positions 653-892 (NDTVGTMMTC…CDVTFMLSED (240 aa)) are hexokinase large subdomain 2. Residues aspartate 654 and threonine 677 each coordinate D-glucose 6-phosphate. Threonine 677 contacts ATP. D-glucose-binding positions include 679–680 (SN), glutamate 705, and glutamate 739. ATP contacts are provided by residues 744–745 (GM), 781–785 (TKFLS), and 860–864 (TLYKL). D-glucose 6-phosphate contacts are provided by residues 858–860 (DGT) and serine 894.

The protein belongs to the hexokinase family. As to expression, widely expressed. Detected in retina, brain, cerebellum, liver, lung, kidney, spleen, pancreas and intestine.

The protein resides in the cytoplasm. It is found in the mitochondrion membrane. It localises to the photoreceptor inner segment. It carries out the reaction a D-hexose + ATP = a D-hexose 6-phosphate + ADP + H(+). The catalysed reaction is D-glucose + ATP = D-glucose 6-phosphate + ADP + H(+). It functions in the pathway carbohydrate metabolism; hexose metabolism. It participates in carbohydrate degradation; glycolysis; D-glyceraldehyde 3-phosphate and glycerone phosphate from D-glucose: step 1/4. Functionally, catalyzes the phosphorylation of hexose to hexose 6-phosphate, although at very low level compared to other hexokinases. Has low glucose phosphorylating activity compared to other hexokinases. Involved in glucose homeostasis and hepatic lipid accumulation. Required to maintain whole-body glucose homeostasis during pregnancy; however additional evidences are required to confirm this role. The chain is Hexokinase HKDC1 from Mus musculus (Mouse).